A 504-amino-acid chain; its full sequence is MSIKSEEISALIKQQLESYQTELSVAETGTVTYVGDGIARAHGLDNALQGELLEFSNGVYGMVQNLESNDVGIVVLGDFDGIREGDTVKRTGRIMEVPVGDAMIGRVVNPLGQPVDGLGEIKTTNTRPIEHKAPGIMQRQSVSEPLQTGIKAIDALVPIGRGQRELIIGDRKTGKTSVAIDAILNQKDQDMICVYVAIGQKDSTVRAQVETLKKLGAMDYTIVVTAGPAEPAPLLYLAPYAGAAMGEEFMMNGKHVLIVYDDLSKQATAYRELSLILRRPPGREAYPGDVFYLHSRLLERAAKLSDELGGGSMTALPIIETQAGDISAYIPTNVISITDGQIFLDSDSFYSGVRPAIDAGASVSRVGGDAQIKAMKSVAGTLRLDLASYRELESFSQFGSDLDAATQAKLNRGQRIVEVLKQPVHSPLKVEEQVMILYALTNGYLDKVAVDDIARYQSELFEFIHASHQDLFDTILATKKLPEADKMNGALDAFAEQFQPTAAK.

An ATP-binding site is contributed by 169 to 176 (GDRKTGKT).

The protein belongs to the ATPase alpha/beta chains family. As to quaternary structure, F-type ATPases have 2 components, CF(1) - the catalytic core - and CF(0) - the membrane proton channel. CF(1) has five subunits: alpha(3), beta(3), gamma(1), delta(1), epsilon(1). CF(0) has three main subunits: a(1), b(2) and c(9-12). The alpha and beta chains form an alternating ring which encloses part of the gamma chain. CF(1) is attached to CF(0) by a central stalk formed by the gamma and epsilon chains, while a peripheral stalk is formed by the delta and b chains.

The protein resides in the cell membrane. The enzyme catalyses ATP + H2O + 4 H(+)(in) = ADP + phosphate + 5 H(+)(out). Its function is as follows. Produces ATP from ADP in the presence of a proton gradient across the membrane. The alpha chain is a regulatory subunit. This Lactiplantibacillus plantarum (strain ATCC BAA-793 / NCIMB 8826 / WCFS1) (Lactobacillus plantarum) protein is ATP synthase subunit alpha.